The primary structure comprises 123 residues: UPF0738 protein BCE33L1094 (123 aa).

Belongs to the UPF0738 family.

This chain is UPF0738 protein BCE33L1094, found in Bacillus cereus (strain ZK / E33L).